The chain runs to 197 residues: Adenylate kinase 1 (197 aa).

19–24 (GSGKGT) is an ATP binding site. The NMP stretch occupies residues 39 to 68 (SSGDLLRAEVQSGSPKGKELKAMMERGELV). AMP-binding positions include Ser-40, Arg-45, 95–98 (GYPR), and Gln-102. The LID stretch occupies residues 132-142 (KRAETSNRVDD). Arg-133 contributes to the ATP binding site. Residues Arg-139 and Arg-150 each coordinate AMP. Gly-178 serves as a coordination point for ATP.

The protein belongs to the adenylate kinase family. AK1 subfamily. Monomer. Requires Mg(2+) as cofactor.

The protein localises to the cytoplasm. The catalysed reaction is AMP + ATP = 2 ADP. It participates in purine metabolism; purine nucleotide biosynthesis. Functionally, catalyzes the reversible transfer of the terminal phosphate group between ATP and AMP. Plays an important role in cellular energy homeostasis and in adenine nucleotide metabolism. This is Adenylate kinase 1 from Schistosoma mansoni (Blood fluke).